The following is a 339-amino-acid chain: NADH-quinone oxidoreductase subunit H (339 aa).

Transmembrane regions (helical) follow at residues 19-39 (LLKI…LTLA), 87-107 (FLLG…VVPF), 120-140 (LLYI…AGWA), 153-173 (SAAQ…GVLM), 191-211 (FWEW…ISAV), 253-273 (ILVA…PVPF), 275-295 (PDSI…FLWF), and 310-330 (LGWK…GAMM).

The protein belongs to the complex I subunit 1 family. In terms of assembly, NDH-1 is composed of 14 different subunits. Subunits NuoA, H, J, K, L, M, N constitute the membrane sector of the complex.

It localises to the cell inner membrane. It carries out the reaction a quinone + NADH + 5 H(+)(in) = a quinol + NAD(+) + 4 H(+)(out). In terms of biological role, NDH-1 shuttles electrons from NADH, via FMN and iron-sulfur (Fe-S) centers, to quinones in the respiratory chain. The immediate electron acceptor for the enzyme in this species is believed to be ubiquinone. Couples the redox reaction to proton translocation (for every two electrons transferred, four hydrogen ions are translocated across the cytoplasmic membrane), and thus conserves the redox energy in a proton gradient. This subunit may bind ubiquinone. The protein is NADH-quinone oxidoreductase subunit H of Methylobacillus flagellatus (strain ATCC 51484 / DSM 6875 / VKM B-1610 / KT).